Consider the following 123-residue polypeptide: Holo-[acyl-carrier-protein] synthase (123 aa).

The Mg(2+) site is built by Asp-8 and Glu-55.

It belongs to the P-Pant transferase superfamily. AcpS family. Mg(2+) is required as a cofactor.

The protein localises to the cytoplasm. It catalyses the reaction apo-[ACP] + CoA = holo-[ACP] + adenosine 3',5'-bisphosphate + H(+). Transfers the 4'-phosphopantetheine moiety from coenzyme A to a Ser of acyl-carrier-protein. The protein is Holo-[acyl-carrier-protein] synthase of Solidesulfovibrio magneticus (strain ATCC 700980 / DSM 13731 / RS-1) (Desulfovibrio magneticus).